We begin with the raw amino-acid sequence, 257 residues long: Phosphate import ATP-binding protein PstB (257 aa).

Positions 5–246 constitute an ABC transporter domain; that stretch reads LEIKDLTAFY…EVIFTSPKNE (242 aa). 37–44 is an ATP binding site; sequence GPSGCGKS.

The protein belongs to the ABC transporter superfamily. Phosphate importer (TC 3.A.1.7) family. As to quaternary structure, the complex is composed of two ATP-binding proteins (PstB), two transmembrane proteins (PstC and PstA) and a solute-binding protein (PstS).

The protein localises to the cell membrane. It carries out the reaction phosphate(out) + ATP + H2O = ADP + 2 phosphate(in) + H(+). Its function is as follows. Part of the ABC transporter complex PstSACB involved in phosphate import. Responsible for energy coupling to the transport system. The protein is Phosphate import ATP-binding protein PstB of Tropheryma whipplei (strain TW08/27) (Whipple's bacillus).